The chain runs to 413 residues: Glucose-1-phosphate adenylyltransferase (413 aa).

Alpha-D-glucose 1-phosphate-binding positions include Tyr-102, Gly-167, 182–183 (EK), and Ser-200.

The protein belongs to the bacterial/plant glucose-1-phosphate adenylyltransferase family. As to quaternary structure, homotetramer.

The enzyme catalyses alpha-D-glucose 1-phosphate + ATP + H(+) = ADP-alpha-D-glucose + diphosphate. It participates in glycan biosynthesis; glycogen biosynthesis. In terms of biological role, involved in the biosynthesis of ADP-glucose, a building block required for the elongation reactions to produce glycogen. Catalyzes the reaction between ATP and alpha-D-glucose 1-phosphate (G1P) to produce pyrophosphate and ADP-Glc. The chain is Glucose-1-phosphate adenylyltransferase from Deinococcus deserti (strain DSM 17065 / CIP 109153 / LMG 22923 / VCD115).